The sequence spans 274 residues: 2,3,4,5-tetrahydropyridine-2,6-dicarboxylate N-succinyltransferase (274 aa).

2 residues coordinate substrate: Arg-106 and Asp-143.

The protein belongs to the transferase hexapeptide repeat family. Homotrimer.

It localises to the cytoplasm. The catalysed reaction is (S)-2,3,4,5-tetrahydrodipicolinate + succinyl-CoA + H2O = (S)-2-succinylamino-6-oxoheptanedioate + CoA. It participates in amino-acid biosynthesis; L-lysine biosynthesis via DAP pathway; LL-2,6-diaminopimelate from (S)-tetrahydrodipicolinate (succinylase route): step 1/3. This Paracidovorax citrulli (strain AAC00-1) (Acidovorax citrulli) protein is 2,3,4,5-tetrahydropyridine-2,6-dicarboxylate N-succinyltransferase.